We begin with the raw amino-acid sequence, 282 residues long: Pantothenate synthetase (282 aa).

30–37 (MGYYHAGH) contributes to the ATP binding site. The Proton donor role is filled by His-37. Position 61 (Gln-61) interacts with (R)-pantoate. Residue Gln-61 coordinates beta-alanine. 147–150 (GQKD) contributes to the ATP binding site. Gln-153 provides a ligand contact to (R)-pantoate. Residues Val-176 and 184–187 (LSSR) each bind ATP.

This sequence belongs to the pantothenate synthetase family. As to quaternary structure, homodimer.

Its subcellular location is the cytoplasm. The catalysed reaction is (R)-pantoate + beta-alanine + ATP = (R)-pantothenate + AMP + diphosphate + H(+). It functions in the pathway cofactor biosynthesis; (R)-pantothenate biosynthesis; (R)-pantothenate from (R)-pantoate and beta-alanine: step 1/1. Its function is as follows. Catalyzes the condensation of pantoate with beta-alanine in an ATP-dependent reaction via a pantoyl-adenylate intermediate. The polypeptide is Pantothenate synthetase (Desulfovibrio desulfuricans (strain ATCC 27774 / DSM 6949 / MB)).